The sequence spans 426 residues: Glutamate-1-semialdehyde 2,1-aminomutase (426 aa).

Lys-265 bears the N6-(pyridoxal phosphate)lysine mark.

The protein belongs to the class-III pyridoxal-phosphate-dependent aminotransferase family. HemL subfamily. In terms of assembly, homodimer. Requires pyridoxal 5'-phosphate as cofactor.

It is found in the cytoplasm. It catalyses the reaction (S)-4-amino-5-oxopentanoate = 5-aminolevulinate. The protein operates within porphyrin-containing compound metabolism; protoporphyrin-IX biosynthesis; 5-aminolevulinate from L-glutamyl-tRNA(Glu): step 2/2. The protein is Glutamate-1-semialdehyde 2,1-aminomutase of Escherichia coli O81 (strain ED1a).